The chain runs to 246 residues: Large ribosomal subunit protein uL30 (246 aa).

M1 carries the N-acetylmethionine modification. A run of 4 repeats spans residues 7–17, 18–28, 29–40, and 41–52. Residues 7–52 form a 4 X 12 AA tandem repeats region; that stretch reads KKVPSVPESLLKRRQAYAAAKAKRLKRLLAQKKFRKAQRKIIYERA.

Belongs to the universal ribosomal protein uL30 family. Component of the large ribosomal subunit.

It is found in the cytoplasm. Component of the large ribosomal subunit. The ribosome is a large ribonucleoprotein complex responsible for the synthesis of proteins in the cell. Binds to G-rich structures in 28S rRNA and in mRNAs. Plays a regulatory role in the translation apparatus; inhibits cell-free translation of mRNAs. In Gallus gallus (Chicken), this protein is Large ribosomal subunit protein uL30 (RPL7).